The primary structure comprises 639 residues: Chaperone protein DnaK (639 aa).

Threonine 199 bears the Phosphothreonine; by autocatalysis mark. A compositionally biased stretch (low complexity) spans 602-613 (AQAQQAAAGAEG). Residues 602-639 (AQAQQAAAGAEGQPEDASAKQDDDVVDAEFEEVKDDKK) are disordered. A compositionally biased stretch (acidic residues) spans 625–639 (DVVDAEFEEVKDDKK).

Belongs to the heat shock protein 70 family.

Functionally, acts as a chaperone. The polypeptide is Chaperone protein DnaK (Pseudoalteromonas atlantica (strain T6c / ATCC BAA-1087)).